A 654-amino-acid polypeptide reads, in one-letter code: Broad substrate specificity ATP-binding cassette transporter ABCG2 (654 aa).

The Cytoplasmic segment spans residues 1 to 394 (MSSSNVEVFI…KNLLGNPQAS (394 aa)). The region spanning 37 to 286 (LSFHNICYRV…FESAGYHCEA (250 aa)) is the ABC transporter domain. ATP contacts are provided by residues 80–87 (GPTGGGKS), 184–190 (RGVSGGE), Glu211, and His243. Positions 388–650 (LGNPQASIAQ…TIAYLKLLFL (263 aa)) constitute an ABC transmembrane type-2 domain. A helical membrane pass occupies residues 395 to 415 (IAQIIVTVILGLVIGAIYFGL). Residues 416–427 (NNDSTGIQNRAG) are Extracellular-facing. Asn417 is a glycosylation site (N-linked (GlcNAc...) asparagine). Residues 428–448 (VLFFLTTNQCFSSVSAVELFV) traverse the membrane as a helical segment. Over 449–476 (VEKKLFIHEYISGYYRVSSYFFGKLLSD) the chain is Cytoplasmic. A helical transmembrane segment spans residues 477 to 497 (LLPMRMLPSIIFTCIVYFMLG). At 498–505 (LKPTADAF) the chain is on the extracellular side. The helical transmembrane segment at 506–526 (FIMMFTLMMVAYSASSMALAI) threads the bilayer. Residues 527 to 534 (AAGQSVVS) lie on the Cytoplasmic side of the membrane. A helical transmembrane segment spans residues 535-555 (VATLLMTICFVFMMIFSGLLV). 3 N-linked (GlcNAc...) asparagine glycosylation sites follow: Asn556, Asn595, and Asn599. Topologically, residues 556 to 629 (NLTTIASWLS…LSPWGLWKNH (74 aa)) are extracellular. An intrachain disulfide couples Cys591 to Cys607. A helical transmembrane segment spans residues 630–650 (VALACMIVIFLTIAYLKLLFL). Residues 651-654 (KKYS) are Cytoplasmic-facing.

Belongs to the ABC transporter superfamily. ABCG family. Eye pigment precursor importer (TC 3.A.1.204) subfamily. In terms of assembly, homodimer; disulfide-linked. The minimal functional unit is a homodimer, but the major oligomeric form in plasma membrane is a homotetramer with possibility of higher order oligomerization up to homododecamers. N-glycosylated. Glycosylation-deficient ABCG2 is normally expressed and functional. Post-translationally, phosphorylated. Phosphorylation may regulate the localization to the plasma membrane, the homooligomerization and therefore, the activity of the transporter.

Its subcellular location is the cell membrane. The protein localises to the apical cell membrane. The protein resides in the mitochondrion membrane. The enzyme catalyses ATP + H2O + xenobioticSide 1 = ADP + phosphate + xenobioticSide 2.. It catalyses the reaction urate(in) + ATP + H2O = urate(out) + ADP + phosphate + H(+). It carries out the reaction indoxyl sulfate(in) + ATP + H2O = indoxyl sulfate(out) + ADP + phosphate + H(+). The catalysed reaction is sphing-4-enine 1-phosphate(in) + ATP + H2O = sphing-4-enine 1-phosphate(out) + ADP + phosphate + H(+). The enzyme catalyses estrone 3-sulfate(in) + ATP + H2O = estrone 3-sulfate(out) + ADP + phosphate + H(+). It catalyses the reaction dehydroepiandrosterone 3-sulfate(in) + ATP + H2O = dehydroepiandrosterone 3-sulfate(out) + ADP + phosphate + H(+). It carries out the reaction 4-methylumbelliferone sulfate(in) + ATP + H2O = 4-methylumbelliferone sulfate(out) + ADP + phosphate + H(+). The catalysed reaction is 5,7-dimethyl-2-methylamino-4-(3-pyridylmethyl)-1,3-benzothiazol-6-yl beta-D-glucuronate(in) + ATP + H2O = 5,7-dimethyl-2-methylamino-4-(3-pyridylmethyl)-1,3-benzothiazol-6-yl beta-D-glucuronate(out) + ADP + phosphate + H(+). The enzyme catalyses 4-methylumbelliferone beta-D-glucuronate(in) + ATP + H2O = 4-methylumbelliferone beta-D-glucuronate(out) + ADP + phosphate + H(+). It catalyses the reaction 5,7-dimethyl-2-methylamino-4-(3-pyridylmethyl)-1,3-benzothiazol-6-yl sulfate(in) + ATP + H2O = 5,7-dimethyl-2-methylamino-4-(3-pyridylmethyl)-1,3-benzothiazol-6-yl sulfate(out) + ADP + phosphate + H(+). It carries out the reaction 17beta-estradiol 17-O-(beta-D-glucuronate)(in) + ATP + H2O = 17beta-estradiol 17-O-(beta-D-glucuronate)(out) + ADP + phosphate + H(+). The catalysed reaction is methotrexate(in) + ATP + H2O = methotrexate(out) + ADP + phosphate + H(+). The enzyme catalyses riboflavin(in) + ATP + H2O = riboflavin(out) + ADP + phosphate + H(+). It catalyses the reaction pheophorbide a(in) + ATP + H2O = pheophorbide a(out) + ADP + phosphate + H(+). It carries out the reaction itaconate(in) + ATP + H2O = itaconate(out) + ADP + phosphate + H(+). Functionally, broad substrate specificity ATP-dependent transporter of the ATP-binding cassette (ABC) family that actively extrudes a wide variety of physiological compounds, dietary toxins and xenobiotics from cells. Involved in porphyrin homeostasis, mediating the export of protoporphyrin IX (PPIX) from both mitochondria to cytosol and cytosol to extracellular space, it also functions in the cellular export of heme. Also mediates the efflux of sphingosine-1-P from cells. Acts as a urate exporter functioning in both renal and extrarenal urate excretion. In kidney, it also functions as a physiological exporter of the uremic toxin indoxyl sulfate. Also involved in the excretion of steroids like estrone 3-sulfate/E1S, 3beta-sulfooxy-androst-5-en-17-one/DHEAS, and other sulfate conjugates. Mediates the secretion of the riboflavin and biotin vitamins into milk. Extrudes pheophorbide a, a phototoxic porphyrin catabolite of chlorophyll, reducing its bioavailability. Plays an important role in the exclusion of xenobiotics from the brain. It confers to cells a resistance to multiple drugs and other xenobiotics including mitoxantrone, pheophorbide, camptothecin, methotrexate, azidothymidine, and the anthracyclines daunorubicin and doxorubicin, through the control of their efflux. In placenta, it limits the penetration of drugs from the maternal plasma into the fetus. May play a role in early stem cell self-renewal by blocking differentiation. In inflammatory macrophages, exports itaconate from the cytosol to the extracellular compartment and limits the activation of TFEB-dependent lysosome biogenesis involved in antibacterial innate immune response. This Macaca mulatta (Rhesus macaque) protein is Broad substrate specificity ATP-binding cassette transporter ABCG2 (ABCG2).